A 190-amino-acid polypeptide reads, in one-letter code: Nucleoside triphosphate pyrophosphatase (190 aa).

Asp69 acts as the Proton acceptor in catalysis.

This sequence belongs to the Maf family. A divalent metal cation serves as cofactor.

The protein localises to the cytoplasm. It catalyses the reaction a ribonucleoside 5'-triphosphate + H2O = a ribonucleoside 5'-phosphate + diphosphate + H(+). The catalysed reaction is a 2'-deoxyribonucleoside 5'-triphosphate + H2O = a 2'-deoxyribonucleoside 5'-phosphate + diphosphate + H(+). Functionally, nucleoside triphosphate pyrophosphatase. May have a dual role in cell division arrest and in preventing the incorporation of modified nucleotides into cellular nucleic acids. This is Nucleoside triphosphate pyrophosphatase from Helicobacter pylori (strain HPAG1).